The primary structure comprises 226 residues: 2-C-methyl-D-erythritol 4-phosphate cytidylyltransferase (226 aa).

The protein belongs to the IspD/TarI cytidylyltransferase family. IspD subfamily.

The catalysed reaction is 2-C-methyl-D-erythritol 4-phosphate + CTP + H(+) = 4-CDP-2-C-methyl-D-erythritol + diphosphate. It participates in isoprenoid biosynthesis; isopentenyl diphosphate biosynthesis via DXP pathway; isopentenyl diphosphate from 1-deoxy-D-xylulose 5-phosphate: step 2/6. Functionally, catalyzes the formation of 4-diphosphocytidyl-2-C-methyl-D-erythritol from CTP and 2-C-methyl-D-erythritol 4-phosphate (MEP). The polypeptide is 2-C-methyl-D-erythritol 4-phosphate cytidylyltransferase (Synechococcus sp. (strain CC9902)).